The sequence spans 197 residues: Pyridoxal 5'-phosphate synthase subunit PdxT (197 aa).

53-55 lines the L-glutamine pocket; that stretch reads GES. The active-site Nucleophile is the C85. Residues R114 and 142–143 each bind L-glutamine; that span reads IR. Residues H179 and E181 each act as charge relay system in the active site.

This sequence belongs to the glutaminase PdxT/SNO family. In the presence of PdxS, forms a dodecamer of heterodimers. Only shows activity in the heterodimer.

The enzyme catalyses aldehydo-D-ribose 5-phosphate + D-glyceraldehyde 3-phosphate + L-glutamine = pyridoxal 5'-phosphate + L-glutamate + phosphate + 3 H2O + H(+). It catalyses the reaction L-glutamine + H2O = L-glutamate + NH4(+). Its pathway is cofactor biosynthesis; pyridoxal 5'-phosphate biosynthesis. Its function is as follows. Catalyzes the hydrolysis of glutamine to glutamate and ammonia as part of the biosynthesis of pyridoxal 5'-phosphate. The resulting ammonia molecule is channeled to the active site of PdxS. This Thermococcus gammatolerans (strain DSM 15229 / JCM 11827 / EJ3) protein is Pyridoxal 5'-phosphate synthase subunit PdxT.